The sequence spans 126 residues: Fluoride-specific ion channel FluC (126 aa).

4 helical membrane passes run 4–24 (SILA…FLGL), 36–56 (GTLA…ALFA), 68–88 (LIIT…AEVV), and 99–119 (AFAA…AGIA). The Na(+) site is built by G75 and T78.

Belongs to the fluoride channel Fluc/FEX (TC 1.A.43) family.

The protein resides in the cell inner membrane. The enzyme catalyses fluoride(in) = fluoride(out). Its activity is regulated as follows. Na(+) is not transported, but it plays an essential structural role and its presence is essential for fluoride channel function. Fluoride-specific ion channel. Important for reducing fluoride concentration in the cell, thus reducing its toxicity. This is Fluoride-specific ion channel FluC from Chromobacterium violaceum (strain ATCC 12472 / DSM 30191 / JCM 1249 / CCUG 213 / NBRC 12614 / NCIMB 9131 / NCTC 9757 / MK).